Consider the following 279-residue polypeptide: uncharacterized protein (279 aa).

Positions 233–279 are disordered; it reads NDHQLHDSPLCSDVSDSTSNNNYDESLNFSNDNNNSSFNDFDDDNFI. The span at 246 to 259 shows a compositional bias: polar residues; the sequence is VSDSTSNNNYDESL. Low complexity predominate over residues 260–271; sequence NFSNDNNNSSFN.

This is an uncharacterized protein from Buchnera aphidicola subsp. Baizongia pistaciae (strain Bp).